The primary structure comprises 80 residues: UPF0512 protein Q (80 aa).

This sequence belongs to the UPF0512 family.

The sequence is that of UPF0512 protein Q from Dictyostelium discoideum (Social amoeba).